The primary structure comprises 192 residues: MKGLRKLLLVLGVMLLATGVALAAGGEAASGEHHYDWTNLGFRLANFAIFIAIIYYAAGKKLIAFFGGRRKGIEQELNDLETRKTDAKKQLGDVEKRIADLENERKAIIAEYQAQGEALKAAIISKAETSARQIVEQAKKSAENEVKYAKDAMREELADMIVDATEKLLKERLDGKEQEKLIDKYLTKVVLN.

The helical transmembrane segment at 7 to 27 (LLLVLGVMLLATGVALAAGGE) threads the bilayer.

It belongs to the ATPase B chain family. F-type ATPases have 2 components, F(1) - the catalytic core - and F(0) - the membrane proton channel. F(1) has five subunits: alpha(3), beta(3), gamma(1), delta(1), epsilon(1). F(0) has three main subunits: a(1), b(2) and c(10-14). The alpha and beta chains form an alternating ring which encloses part of the gamma chain. F(1) is attached to F(0) by a central stalk formed by the gamma and epsilon chains, while a peripheral stalk is formed by the delta and b chains.

It is found in the cell inner membrane. Functionally, f(1)F(0) ATP synthase produces ATP from ADP in the presence of a proton or sodium gradient. F-type ATPases consist of two structural domains, F(1) containing the extramembraneous catalytic core and F(0) containing the membrane proton channel, linked together by a central stalk and a peripheral stalk. During catalysis, ATP synthesis in the catalytic domain of F(1) is coupled via a rotary mechanism of the central stalk subunits to proton translocation. In terms of biological role, component of the F(0) channel, it forms part of the peripheral stalk, linking F(1) to F(0). This chain is ATP synthase subunit b, found in Oleidesulfovibrio alaskensis (strain ATCC BAA-1058 / DSM 17464 / G20) (Desulfovibrio alaskensis).